The primary structure comprises 352 residues: MTVLNGMEPLAGDMTVVIAGITDSPVGYAGVDGDEQWATEIRRLTRLRGATVLAHNYQLPAIQDIADYVGDSLALSRIAAEVPEETIVFCGVHFMAETAKILSPNKTVLIPDQRAGCSLADSITPDELCAWKDEHPGAAVVSYVNTTAEVKALTDICCTSSNAVDVVESIDPSREVLFCPDQFLGAHVRRVTGRKNVYVWMGECHVHAGINGDELVDQARANPDAELFVHPECGCSTSALYLAGEGAFPPDRVKILSTGGMLTAARQTQYRKILVATEVGMLYQLRRAAPEIDFRAVNDRASCKYMKMITPGALLRCLVEGTDEVHVDSEIAAAGRRSVQRMIEIGLPGGGE.

Residues H55 and S72 each contribute to the iminosuccinate site. C117 is a [4Fe-4S] cluster binding site. Residues 143–145 (YVN) and S160 each bind iminosuccinate. C204 contacts [4Fe-4S] cluster. Residues 230-232 (HPE) and T258 each bind iminosuccinate. C303 serves as a coordination point for [4Fe-4S] cluster.

This sequence belongs to the quinolinate synthase family. Type 2 subfamily. It depends on [4Fe-4S] cluster as a cofactor.

Its subcellular location is the cytoplasm. The enzyme catalyses iminosuccinate + dihydroxyacetone phosphate = quinolinate + phosphate + 2 H2O + H(+). It functions in the pathway cofactor biosynthesis; NAD(+) biosynthesis; quinolinate from iminoaspartate: step 1/1. Its function is as follows. Catalyzes the condensation of iminoaspartate with dihydroxyacetone phosphate to form quinolinate. This is Quinolinate synthase from Mycobacterium leprae (strain Br4923).